The sequence spans 65 residues: KEDGYLVDKTGCKKSCYKLGENDYCNRECKWKHVGGSYGYCYGFGCYCEGLSDSTPTWPLPNKTC.

One can recognise an LCN-type CS-alpha/beta domain in the interval Glu-2–Cys-65. 4 cysteine pairs are disulfide-bonded: Cys-12/Cys-65, Cys-16/Cys-41, Cys-25/Cys-46, and Cys-29/Cys-48.

As to expression, expressed by the venom gland.

The protein localises to the secreted. Its function is as follows. Beta toxins bind voltage-independently at site-4 of sodium channels (Nav) and shift the voltage of activation toward more negative potentials thereby affecting sodium channel activation and promoting spontaneous and repetitive firing. Not toxic to mice, chicks, crickets or woodlice (at 5 ug). The polypeptide is Toxin Co52 (Centruroides ornatus (Scorpion)).